The primary structure comprises 690 residues: Elongation factor G (690 aa).

The 276-residue stretch at 8-283 (EDYRNFGIMA…AVVDFLPSPL (276 aa)) folds into the tr-type G domain. GTP contacts are provided by residues 17–24 (AHIDAGKT), 81–85 (DTPGH), and 135–138 (NKMD).

It belongs to the TRAFAC class translation factor GTPase superfamily. Classic translation factor GTPase family. EF-G/EF-2 subfamily.

It localises to the cytoplasm. Catalyzes the GTP-dependent ribosomal translocation step during translation elongation. During this step, the ribosome changes from the pre-translocational (PRE) to the post-translocational (POST) state as the newly formed A-site-bound peptidyl-tRNA and P-site-bound deacylated tRNA move to the P and E sites, respectively. Catalyzes the coordinated movement of the two tRNA molecules, the mRNA and conformational changes in the ribosome. This chain is Elongation factor G, found in Nitrobacter hamburgensis (strain DSM 10229 / NCIMB 13809 / X14).